The sequence spans 389 residues: Cytochrome b (389 aa).

Transmembrane regions (helical) follow at residues 32–52 (FGSL…FLAM), 76–98 (WIVR…AHIG), 113–133 (LWSI…LGYV), and 179–199 (FFSL…AHFM). Histidine 82 and histidine 96 together coordinate heme b. Histidine 183 and histidine 197 together coordinate heme b. Residue histidine 202 participates in a ubiquinone binding. Transmembrane regions (helical) follow at residues 225-245 (FIFK…VIVF), 289-309 (LLGV…PLTD), 321-341 (AMKF…WLGS), and 348-368 (YLEI…VIVP).

Belongs to the cytochrome b family. In terms of assembly, fungal cytochrome b-c1 complex contains 10 subunits; 3 respiratory subunits, 2 core proteins and 5 low-molecular weight proteins. Cytochrome b-c1 complex is a homodimer. Heme b serves as cofactor.

It is found in the mitochondrion inner membrane. In terms of biological role, component of the ubiquinol-cytochrome c reductase complex (complex III or cytochrome b-c1 complex) that is part of the mitochondrial respiratory chain. The b-c1 complex mediates electron transfer from ubiquinol to cytochrome c. Contributes to the generation of a proton gradient across the mitochondrial membrane that is then used for ATP synthesis. This chain is Cytochrome b (COB), found in Strobilurus tenacellus.